A 133-amino-acid polypeptide reads, in one-letter code: Salivary cystatin-L (133 aa).

The first 19 residues, methionine 1–alanine 19, serve as a signal peptide directing secretion. The Cystatin domain maps to alanine 30 to glutamate 117. 2 disulfide bridges follow: cysteine 89–cysteine 100 and cysteine 111–cysteine 130.

The protein belongs to the cystatin family. Monomer. Can form homodimers in vitro, but probably not in vivo. Homodimers are predicted to be inactive; dimerization disrupts the interaction with target proteases.

It is found in the secreted. Functionally, inhibitor of cysteine proteinases. Inhibits host immune responses via its inhibition of host cathepsins. Contributes to the suppression of the host's immune response to tick salivary proteins and is important for successful feeding on hosts. Inhibits differentiation of host dendritic cells. Inhibits proliferation of host T-cells in response to antigen stimulus. Down-regulates TLR2-mediated host responses to infection by B.burgdorferi and the production of the chemokine CCL3 by host dendritic cells. Down-regulates host responses to infection by B.burgdorferi and the production of IFNB1 by host dendritic cells. Down-regulates IL1B production by host mast cells, and this then leads to impaired activation of IL1R1, resulting in decreased IL9 production. Inhibits host inflammatory reactions and recruitment of host neutrophils. Inhibits papain and cathepsin L (CTSL) (in vitro). Inhibits cathepsin S (CTSS) (in vitro). Inhibits CTSV and CTSC, but to a lesser degree (in vitro). The chain is Salivary cystatin-L from Ixodes scapularis (Black-legged tick).